The following is a 231-amino-acid chain: Probable methylthioribulose-1-phosphate dehydratase (231 aa).

Residue cysteine 90 participates in substrate binding. Zn(2+) contacts are provided by histidine 108 and histidine 110. Residue glutamate 132 is the Proton donor/acceptor of the active site. A Zn(2+)-binding site is contributed by histidine 188.

It belongs to the aldolase class II family. MtnB subfamily. Zn(2+) is required as a cofactor.

It localises to the cytoplasm. The catalysed reaction is 5-(methylsulfanyl)-D-ribulose 1-phosphate = 5-methylsulfanyl-2,3-dioxopentyl phosphate + H2O. It participates in amino-acid biosynthesis; L-methionine biosynthesis via salvage pathway; L-methionine from S-methyl-5-thio-alpha-D-ribose 1-phosphate: step 2/6. Functionally, catalyzes the dehydration of methylthioribulose-1-phosphate (MTRu-1-P) into 2,3-diketo-5-methylthiopentyl-1-phosphate (DK-MTP-1-P). In Anopheles gambiae (African malaria mosquito), this protein is Probable methylthioribulose-1-phosphate dehydratase.